The primary structure comprises 245 residues: MGAYDELMKRRGRALLPLLDPDKVISEEDYYERAVKALCEYAATFLVGGSTGVGQIETEKTVALVKKNCDKPVTVFPGSPCQVAPSADAILFMSLLNSTNRKYLIDYQLEGSLLVYRYGLEAIPTAYIIVGEGGTAGWVGEAKAIPPEKPELLSMYVLAAKYLGFKVVYLEAGSGVKRSVPPEAVRLAKKLLGEEVILIVGGGIKDEEVAAEILRAGADGVVVGTVVERDLSAAERIARRVAGWT.

D20 and S50 together coordinate Mg(2+). Sn-glycerol 1-phosphate-binding positions include Y169 to G175, G202 to G203, and G224 to T225.

This sequence belongs to the GGGP/HepGP synthase family. Group II subfamily. Mg(2+) is required as a cofactor.

Its subcellular location is the cytoplasm. It carries out the reaction sn-glycerol 1-phosphate + (2E,6E,10E)-geranylgeranyl diphosphate = sn-3-O-(geranylgeranyl)glycerol 1-phosphate + diphosphate. It functions in the pathway membrane lipid metabolism; glycerophospholipid metabolism. Prenyltransferase that catalyzes the transfer of the geranylgeranyl moiety of geranylgeranyl diphosphate (GGPP) to the C3 hydroxyl of sn-glycerol-1-phosphate (G1P). This reaction is the first ether-bond-formation step in the biosynthesis of archaeal membrane lipids. The polypeptide is Geranylgeranylglyceryl phosphate synthase (Ignicoccus hospitalis (strain KIN4/I / DSM 18386 / JCM 14125)).